The chain runs to 328 residues: Tetraacyldisaccharide 4'-kinase (328 aa).

Residue 55-62 (TAGGNGKT) participates in ATP binding.

The protein belongs to the LpxK family.

The catalysed reaction is a lipid A disaccharide + ATP = a lipid IVA + ADP + H(+). The protein operates within glycolipid biosynthesis; lipid IV(A) biosynthesis; lipid IV(A) from (3R)-3-hydroxytetradecanoyl-[acyl-carrier-protein] and UDP-N-acetyl-alpha-D-glucosamine: step 6/6. In terms of biological role, transfers the gamma-phosphate of ATP to the 4'-position of a tetraacyldisaccharide 1-phosphate intermediate (termed DS-1-P) to form tetraacyldisaccharide 1,4'-bis-phosphate (lipid IVA). This Shigella boydii serotype 18 (strain CDC 3083-94 / BS512) protein is Tetraacyldisaccharide 4'-kinase.